The following is a 271-amino-acid chain: Autophagy-related protein 27 (271 aa).

An N-terminal signal peptide occupies residues 1 to 19 (MVSKTWICGFISIITVVQA). One can recognise an MRH domain in the interval 20-166 (LSCEKHDVLK…TLKGPSGCLK (147 aa)). Topologically, residues 20–197 (LSCEKHDVLK…KKPAKKAGGT (178 aa)) are lumenal. Disulfide bonds link C22/C60, C71/C78, and C135/C164. The segment at 161–190 (PSGCLKSKDDDKKNGDGDNGKDGDNEGKKP) is disordered. Residues 166 to 189 (KSKDDDKKNGDGDNGKDGDNEGKK) show a composition bias toward basic and acidic residues. Residues 198 to 218 (LWFTWLFLYALLFTLIYLMVV) traverse the membrane as a helical segment. The Cytoplasmic portion of the chain corresponds to 219–271 (SFLNTRGGSFQDFRAEFIQRSTQFLTSLPEFCREVVSRILGRSTAQRGGYSAV).

Belongs to the ATG27 family. Forms a complex with ATG9 and ATG23.

It is found in the cytoplasmic vesicle membrane. The protein resides in the golgi apparatus membrane. Its subcellular location is the mitochondrion membrane. It localises to the preautophagosomal structure membrane. In terms of biological role, effector of VPS34 phosphatidylinositol 3-phosphate kinase signaling. Regulates the cytoplasm to vacuole transport (Cvt) vesicle formation. Plays a role in ATG protein retrieval from the pre-autophagosomal structure (PAS) and is especially required for autophagy-dependent cycling of ATG9. This chain is Autophagy-related protein 27 (ATG27), found in Saccharomyces cerevisiae (strain YJM789) (Baker's yeast).